Consider the following 448-residue polypeptide: N-succinylarginine dihydrolase (448 aa).

Substrate is bound by residues 19–28 (GGLSYGNVAS), N110, and 137–138 (HR). Residue E174 is part of the active site. R214 provides a ligand contact to substrate. The active site involves H250. 2 residues coordinate substrate: D252 and N365. The active-site Nucleophile is C371.

Belongs to the succinylarginine dihydrolase family. In terms of assembly, homodimer.

The enzyme catalyses N(2)-succinyl-L-arginine + 2 H2O + 2 H(+) = N(2)-succinyl-L-ornithine + 2 NH4(+) + CO2. It participates in amino-acid degradation; L-arginine degradation via AST pathway; L-glutamate and succinate from L-arginine: step 2/5. In terms of biological role, catalyzes the hydrolysis of N(2)-succinylarginine into N(2)-succinylornithine, ammonia and CO(2). The chain is N-succinylarginine dihydrolase from Pseudomonas savastanoi pv. phaseolicola (strain 1448A / Race 6) (Pseudomonas syringae pv. phaseolicola (strain 1448A / Race 6)).